A 61-amino-acid chain; its full sequence is Weak toxin CM-2 (61 aa).

Cystine bridges form between Cys-3/Cys-21, Cys-14/Cys-37, Cys-41/Cys-53, and Cys-54/Cys-59.

This sequence belongs to the three-finger toxin family. Short-chain subfamily. Orphan group VI sub-subfamily. As to expression, expressed by the venom gland.

It is found in the secreted. This is Weak toxin CM-2 from Naja haje haje (Egyptian cobra).